We begin with the raw amino-acid sequence, 129 residues long: Methylmalonyl-CoA decarboxylase subunit gamma (129 aa).

2 stretches are compositionally biased toward low complexity: residues 24–39 (APAA…APAP) and 49–58 (PAAAAAPVPA). A disordered region spans residues 24 to 58 (APAAAPKAAPAAAPAPKAAPAPAPAPAAAAAPVPA). Positions 51–129 (AAAAPVPAGA…STGDDMVVLG (79 aa)) constitute a Biotinyl-binding domain. At Lys-95 the chain carries N6-biotinyllysine.

As to quaternary structure, the methylmalonyl-CoA decarboxylase is composed of five subunits: the carboxyltransferase alpha subunit (MmdA), the tunnel beta subunit (MmdB), the biotin-containing gamma subunit (MmdC), and the delta (MmdD) and epsilon (MmdE) subunits. Requires biotin as cofactor.

It localises to the cell membrane. It carries out the reaction (S)-methylmalonyl-CoA + Na(+)(in) + H(+)(out) = propanoyl-CoA + Na(+)(out) + CO2. With respect to regulation, completely inhibited by avidin. In terms of biological role, biotin-containing subunit of the sodium ion pump methylmalonyl-CoA decarboxylase, which converts the chemical energy of a decarboxylation reaction into an electrochemical gradient of Na(+) ions across the cytoplasmic membrane, thereby creating a sodium ion motive force that is used for ATP synthesis. Can also convert malonyl-CoA into acetyl-CoA. The chain is Methylmalonyl-CoA decarboxylase subunit gamma from Veillonella parvula (Staphylococcus parvulus).